The following is a 199-amino-acid chain: mRNA export protein mlo3 (199 aa).

The disordered stretch occupies residues 1-41 (MSMELDQSLDAIIASKPKGGIRKRRARSNKPKPTKNAKPAV). Residues 19–35 (GGIRKRRARSNKPKPTK) show a composition bias toward basic residues. An RRM domain is found at 55 to 134 (SKIIVSNLPT…RKMKVEIILD (80 aa)). Residues 144-199 (ARVSPASNASATASKNGAKSSKRKTTRRRRTPNRPKKSAEELDKEMDDYFGSNEKE) are disordered. Polar residues predominate over residues 148–161 (PASNASATASKNGA). A compositionally biased stretch (basic residues) spans 163 to 179 (SSKRKTTRRRRTPNRPK).

As to quaternary structure, interacts with rpn15/dss1, mex67 and uap56.

It localises to the nucleus. Has a role in the mRNA export process. Interferes with mitotic chromosome segregation when overexpressed. The sequence is that of mRNA export protein mlo3 (mlo3) from Schizosaccharomyces pombe (strain 972 / ATCC 24843) (Fission yeast).